A 357-amino-acid polypeptide reads, in one-letter code: Histidinol-phosphate aminotransferase (357 aa).

At Lys222 the chain carries N6-(pyridoxal phosphate)lysine.

Belongs to the class-II pyridoxal-phosphate-dependent aminotransferase family. Histidinol-phosphate aminotransferase subfamily. In terms of assembly, homodimer. Pyridoxal 5'-phosphate serves as cofactor.

The enzyme catalyses L-histidinol phosphate + 2-oxoglutarate = 3-(imidazol-4-yl)-2-oxopropyl phosphate + L-glutamate. It functions in the pathway amino-acid biosynthesis; L-histidine biosynthesis; L-histidine from 5-phospho-alpha-D-ribose 1-diphosphate: step 7/9. The chain is Histidinol-phosphate aminotransferase from Leuconostoc mesenteroides subsp. mesenteroides (strain ATCC 8293 / DSM 20343 / BCRC 11652 / CCM 1803 / JCM 6124 / NCDO 523 / NBRC 100496 / NCIMB 8023 / NCTC 12954 / NRRL B-1118 / 37Y).